We begin with the raw amino-acid sequence, 422 residues long: MNIVLFLGYLSILFAGGAIIAKIAKKIGIPDIPLLLIFGLILSILNVIPKNIVESSFDFIGNFGLIILLFIGSFEMEWNIMKRVLDVIIKLDILALLIVWIISGIVFNFVFHLPILSLIGLLFGAIVSATDPATLIPIFSSMDIDPEVAITLEAESVFNDPLGIVVTLICLSALGLAKAENPILEFFSLAVGGIILGVIAGKFYEIIISKIKFEDYIAPFTLGLAIAFWYFAEGIFPSITGYEISGFMAVAIMGLYIGNVIVHKKEHKKDMEKVAVFMDELSIFIRILIFVLLGASISIPLLEKYALPAFLCALGSILLARPVGVLIATAIPPIRPLTERIYLALEGPRGVVPATLAAMVYTEIMKHPNIVPKNIASLMPPTELAGTILVATFMTIIVSVVLEASWAKPLANILLKRKTSTS.

13 helical membrane-spanning segments follow: residues Ile3–Ile23, Gly28–Ile48, Ile52–Gly72, Ile93–Leu113, Ile119–Phe139, Val157–Ala177, Ile183–Phe203, Tyr216–Phe236, Tyr242–Val262, Leu281–Leu301, Leu307–Ile327, Ile341–Tyr361, and Leu384–Ala404.

This sequence belongs to the monovalent cation:proton antiporter 1 (CPA1) transporter (TC 2.A.36) family.

It is found in the cell membrane. Functionally, this is probably a Na(+)/H(+) antiporter. The sequence is that of Probable Na(+)/H(+) antiporter 2 from Methanocaldococcus jannaschii (strain ATCC 43067 / DSM 2661 / JAL-1 / JCM 10045 / NBRC 100440) (Methanococcus jannaschii).